A 427-amino-acid chain; its full sequence is Adenylosuccinate synthetase (427 aa).

GTP-binding positions include 11–17 (GDEGKGK) and 39–41 (GHT). Aspartate 12 functions as the Proton acceptor in the catalytic mechanism. Aspartate 12 and glycine 39 together coordinate Mg(2+). IMP contacts are provided by residues 12 to 15 (DEGK), 37 to 40 (NAGH), threonine 132, arginine 146, glutamine 223, threonine 238, and arginine 302. Histidine 40 (proton donor) is an active-site residue. A substrate-binding site is contributed by 298-304 (TTTGRPR). GTP is bound by residues arginine 304, 330–332 (KLD), and 412–414 (GVG).

Belongs to the adenylosuccinate synthetase family. Homodimer. Mg(2+) is required as a cofactor.

It localises to the cytoplasm. The enzyme catalyses IMP + L-aspartate + GTP = N(6)-(1,2-dicarboxyethyl)-AMP + GDP + phosphate + 2 H(+). The protein operates within purine metabolism; AMP biosynthesis via de novo pathway; AMP from IMP: step 1/2. Its function is as follows. Plays an important role in the de novo pathway and in the salvage pathway of purine nucleotide biosynthesis. Catalyzes the first committed step in the biosynthesis of AMP from IMP. The protein is Adenylosuccinate synthetase (purA) of Dictyostelium discoideum (Social amoeba).